A 210-amino-acid chain; its full sequence is RNA binding protein, mRNA processing factor 2 (210 aa).

Residues 1–10 are compositionally biased toward basic and acidic residues; sequence MSNLKPDVEH. The segment at 1–25 is disordered; sequence MSNLKPDVEHCTGAGTGTGTGPSGP. S2 is subject to N-acetylserine. The 78-residue stretch at 31–108 folds into the RRM domain; that stretch reads RTLFVSGLPV…QTLRLEFAKA (78 aa). The interval 41-51 is important for homodimerization; the sequence is DIKPRELYLLF.

Homodimer. Interacts with EEF2.

It is found in the cytoplasm. The protein resides in the nucleus. It localises to the stress granule. Its function is as follows. RNA-binding protein involved in the regulation of smooth muscle cell differentiation and proliferation in the gastrointestinal system. Binds NOG mRNA, the major inhibitor of the bone morphogenetic protein (BMP) pathway. Mediates an increase of NOG mRNA levels, thereby contributing to the negative regulation of BMP signaling pathway and promoting reversible dedifferentiation and proliferation of smooth muscle cells. Acts as a pre-mRNA alternative splicing regulator. Mediates ACTN1 and FLNB alternative splicing. Likely binds to mRNA tandem CAC trinucleotide or CA dinucleotide motifs. The polypeptide is RNA binding protein, mRNA processing factor 2 (Rbpms2) (Rattus norvegicus (Rat)).